Reading from the N-terminus, the 299-residue chain is Oxygen-dependent coproporphyrinogen-III oxidase (299 aa).

S92 lines the substrate pocket. A divalent metal cation is bound by residues H96 and H106. Catalysis depends on H106, which acts as the Proton donor. Substrate is bound at residue N108–R110. Residues H145 and H175 each coordinate a divalent metal cation. Positions Y240–E275 are important for dimerization. Position 258-260 (G258–R260) interacts with substrate.

The protein belongs to the aerobic coproporphyrinogen-III oxidase family. In terms of assembly, homodimer. A divalent metal cation is required as a cofactor.

Its subcellular location is the cytoplasm. The catalysed reaction is coproporphyrinogen III + O2 + 2 H(+) = protoporphyrinogen IX + 2 CO2 + 2 H2O. It participates in porphyrin-containing compound metabolism; protoporphyrin-IX biosynthesis; protoporphyrinogen-IX from coproporphyrinogen-III (O2 route): step 1/1. In terms of biological role, involved in the heme biosynthesis. Catalyzes the aerobic oxidative decarboxylation of propionate groups of rings A and B of coproporphyrinogen-III to yield the vinyl groups in protoporphyrinogen-IX. The chain is Oxygen-dependent coproporphyrinogen-III oxidase from Salmonella heidelberg (strain SL476).